We begin with the raw amino-acid sequence, 530 residues long: UDP-glucuronosyltransferase 2B15 (530 aa).

An N-terminal signal peptide occupies residues 1 to 23; it reads MSGKWISALLLLQISFCFKSGNC. N-linked (GlcNAc...) asparagine glycosylation is present at Asn-316. A helical transmembrane segment spans residues 494–510; that stretch reads VIGFLLSCVAVTVVLAL.

This sequence belongs to the UDP-glycosyltransferase family. N-glycosylated. Liver. Lower levels seen in the kidney and testis.

The protein localises to the endoplasmic reticulum membrane. The catalysed reaction is glucuronate acceptor + UDP-alpha-D-glucuronate = acceptor beta-D-glucuronoside + UDP + H(+). The enzyme catalyses 17alpha-estradiol + UDP-alpha-D-glucuronate = 17alpha-estradiol 3-O-(beta-D-glucuronate) + UDP + H(+). It catalyses the reaction 16alpha,17alpha-estriol + UDP-alpha-D-glucuronate = 16alpha,17alpha-estriol 3-O-(beta-D-glucuronate) + UDP + H(+). It carries out the reaction 17beta-hydroxy-5alpha-androstan-3-one + UDP-alpha-D-glucuronate = 5alpha-dihydrotestosterone 17-O-(beta-D-glucuronate) + UDP + H(+). UDP-glucuronosyltransferase (UGT) that catalyzes phase II biotransformation reactions in which lipophilic substrates are conjugated with glucuronic acid to increase the metabolite's water solubility, thereby facilitating excretion into either the urine or bile. Essential for the elimination and detoxification of drugs, xenobiotics and endogenous compounds. Catalyzes the glucuronidation of endogenous steroid hormones such as androgens (testosterone, androsterone) and estrogens (estradiol, epiestradiol, estriol, catechol estrogens). Displays glucuronidation activity toward several classes of xenoblotic substrates, including phenolic compounds (eugenol, 4-nitrophenol, 4-hydroxybiphenyl) and phenylpropanoids (naringenin, coumarins). Catalyzes the glucuronidation of monoterpenoid alcohols such as borneol, menthol and isomenthol, a class of natural compounds used in essential oils. This Rattus norvegicus (Rat) protein is UDP-glucuronosyltransferase 2B15.